The sequence spans 273 residues: MIELKDVQGFRPDYEIPIKRAGIKSFKRRVKLNYNNESFDSYVDVSISVSLNPDRKGLDMSRTIESVRSSYNLNDVAYDIYNDLFSRINYSSSGYVNVSFDFYYNNKIYPVSLIAEGDKNDVKRYVEVSAEGMTVCPCAMETIRSIMLYDYNVSYGDIGISHNQRNKASLKIQYIKDAHLERLIDILESSFSYPVRNMLKRYDEGKMIIEAHKRPKFVEDVVREIAYKAAFMEPEMNLYMDVRSESFESIHPHNAYAEIEDYTANIRSYLKNR.

Belongs to the GTP cyclohydrolase IV family. Homodimer. Fe(2+) is required as a cofactor.

The catalysed reaction is GTP + H2O = 7,8-dihydroneopterin 2',3'-cyclic phosphate + formate + diphosphate + H(+). It participates in cofactor biosynthesis; 5,6,7,8-tetrahydromethanopterin biosynthesis. In terms of biological role, converts GTP to 7,8-dihydro-D-neopterin 2',3'-cyclic phosphate, the first intermediate in the biosynthesis of coenzyme methanopterin. This Picrophilus torridus (strain ATCC 700027 / DSM 9790 / JCM 10055 / NBRC 100828 / KAW 2/3) protein is GTP cyclohydrolase MptA.